Reading from the N-terminus, the 158-residue chain is 2-C-methyl-D-erythritol 2,4-cyclodiphosphate synthase (158 aa).

The a divalent metal cation site is built by D8 and H10. Residues 8-10 and 34-35 each bind 4-CDP-2-C-methyl-D-erythritol 2-phosphate; these read DVH and HS. H42 provides a ligand contact to a divalent metal cation. 4-CDP-2-C-methyl-D-erythritol 2-phosphate-binding positions include 56 to 58, 61 to 65, 100 to 106, 132 to 135, F139, and K142; these read DIG, FPDTD, AQKPKML, and TTEE.

Belongs to the IspF family. Homotrimer. The cofactor is a divalent metal cation.

The enzyme catalyses 4-CDP-2-C-methyl-D-erythritol 2-phosphate = 2-C-methyl-D-erythritol 2,4-cyclic diphosphate + CMP. Its pathway is isoprenoid biosynthesis; isopentenyl diphosphate biosynthesis via DXP pathway; isopentenyl diphosphate from 1-deoxy-D-xylulose 5-phosphate: step 4/6. Functionally, involved in the biosynthesis of isopentenyl diphosphate (IPP) and dimethylallyl diphosphate (DMAPP), two major building blocks of isoprenoid compounds. Catalyzes the conversion of 4-diphosphocytidyl-2-C-methyl-D-erythritol 2-phosphate (CDP-ME2P) to 2-C-methyl-D-erythritol 2,4-cyclodiphosphate (ME-CPP) with a corresponding release of cytidine 5-monophosphate (CMP). This chain is 2-C-methyl-D-erythritol 2,4-cyclodiphosphate synthase, found in Clostridium tetani (strain Massachusetts / E88).